The following is a 335-amino-acid chain: Trans-3-hydroxy-L-proline dehydratase (335 aa).

C91 acts as the Proton acceptor in catalysis. Substrate is bound by residues 92–93 (GH), D251, and 256–257 (GS).

Belongs to the proline racemase family.

It catalyses the reaction trans-3-hydroxy-L-proline = 1-pyrroline-2-carboxylate + H2O. In terms of biological role, catalyzes the dehydration of trans-3-hydroxy-L-proline (t3LHyp) to Delta(1)-pyrroline-2-carboxylate (Pyr2C). Is likely involved in a degradation pathway that converts t3LHyp to L-proline. Displays neither trans-4-hydroxy-L-proline (t4LHyp) epimerase nor proline racemase activity. This Burkholderia ambifaria (strain ATCC BAA-244 / DSM 16087 / CCUG 44356 / LMG 19182 / AMMD) (Burkholderia cepacia (strain AMMD)) protein is Trans-3-hydroxy-L-proline dehydratase.